A 122-amino-acid polypeptide reads, in one-letter code: Large ribosomal subunit protein uL14 (122 aa).

The protein belongs to the universal ribosomal protein uL14 family. As to quaternary structure, part of the 50S ribosomal subunit. Forms a cluster with proteins L3 and L19. In the 70S ribosome, L14 and L19 interact and together make contacts with the 16S rRNA in bridges B5 and B8.

Binds to 23S rRNA. Forms part of two intersubunit bridges in the 70S ribosome. This chain is Large ribosomal subunit protein uL14, found in Streptococcus pneumoniae (strain JJA).